The sequence spans 182 residues: Ribosome maturation factor RimM (182 aa).

The 74-residue stretch at 106–179 (EGEFHVLDLI…RIEITPPPGL (74 aa)) folds into the PRC barrel domain.

The protein belongs to the RimM family. As to quaternary structure, binds ribosomal protein uS19.

It is found in the cytoplasm. An accessory protein needed during the final step in the assembly of 30S ribosomal subunit, possibly for assembly of the head region. Essential for efficient processing of 16S rRNA. May be needed both before and after RbfA during the maturation of 16S rRNA. It has affinity for free ribosomal 30S subunits but not for 70S ribosomes. This chain is Ribosome maturation factor RimM, found in Synechococcus elongatus (strain ATCC 33912 / PCC 7942 / FACHB-805) (Anacystis nidulans R2).